A 510-amino-acid polypeptide reads, in one-letter code: NAD(P)H-quinone oxidoreductase subunit 2 B, chloroplastic (510 aa).

Helical transmembrane passes span 24 to 44, 57 to 77, 99 to 119, 124 to 144, 149 to 169, 183 to 203, 227 to 247, 295 to 315, 323 to 343, 347 to 367, 395 to 415, 418 to 438, and 482 to 502; these read LLLF…GLIL, IPWL…ALLF, IFQF…VEYI, MAIT…MFLC, LITI…LSGY, YLLM…WLYG, PGIS…LSPA, WHLL…LIAI, MLAY…IVGD, GYAS…GTFA, ALSL…AGFF, LHLF…IGLL, and LSMI…NPII.

The protein belongs to the complex I subunit 2 family. As to quaternary structure, NDH is composed of at least 16 different subunits, 5 of which are encoded in the nucleus.

The protein resides in the plastid. The protein localises to the chloroplast thylakoid membrane. The catalysed reaction is a plastoquinone + NADH + (n+1) H(+)(in) = a plastoquinol + NAD(+) + n H(+)(out). It catalyses the reaction a plastoquinone + NADPH + (n+1) H(+)(in) = a plastoquinol + NADP(+) + n H(+)(out). NDH shuttles electrons from NAD(P)H:plastoquinone, via FMN and iron-sulfur (Fe-S) centers, to quinones in the photosynthetic chain and possibly in a chloroplast respiratory chain. The immediate electron acceptor for the enzyme in this species is believed to be plastoquinone. Couples the redox reaction to proton translocation, and thus conserves the redox energy in a proton gradient. This is NAD(P)H-quinone oxidoreductase subunit 2 B, chloroplastic from Cucumis sativus (Cucumber).